We begin with the raw amino-acid sequence, 344 residues long: Thioredoxin domain-containing protein 15 (344 aa).

The N-terminal stretch at Met1–Gly20 is a signal peptide. Topologically, residues Leu21 to Thr305 are extracellular. Disordered regions lie at residues Asp55–Gln119 and Gly136–Ser156. A compositionally biased stretch (basic and acidic residues) spans Glu88–Asp97. The 118-residue stretch at Glu163–Gly280 folds into the Thioredoxin domain. N-linked (GlcNAc...) asparagine glycosylation is found at Asn171, Asn178, Asn190, and Asn277. The chain crosses the membrane as a helical span at residues Val306–Ile326. Residues Arg327–Glu344 lie on the Cytoplasmic side of the membrane.

The protein localises to the cell projection. It localises to the cilium membrane. Its function is as follows. Acts as a positive regulator of ciliary hedgehog signaling. Required for cilia biogenesis. This chain is Thioredoxin domain-containing protein 15 (Txndc15), found in Mus musculus (Mouse).